Here is a 167-residue protein sequence, read N- to C-terminus: Type IV major pilin protein PilE (167 aa).

Residues 1–7 (MNTLQKG) constitute a propeptide, leader sequence. Phe8 carries the N-methylphenylalanine modification. Residues 8–28 (FTLIELMIVIAIVGILAAVAL) form a helical membrane-spanning segment. A glycan (O-linked (GlcNAc...) serine) is linked at Ser70. A disulfide bridge links Cys127 with Cys160.

Belongs to the N-Me-Phe pilin family. In terms of assembly, the pili are polar flexible filaments of about 5.4 nanometers diameter and 2.5 micrometers average length; they consist of only a single polypeptide chain arranged in a helical configuration of five subunits per turn in the assembled pilus.

The protein localises to the fimbrium. Its subcellular location is the membrane. Functionally, major component of the type IV pilus (T4P) that plays a role in cellular adherence, microcolony formation, resistance to neutrophil mediated killing, twitching motility as well as transformation. Mediates the attachment and the formation of bacterial microcolonies on host epithelial cells. Mechanistically, pili retractation induces host NF-kappa-B activation in infected cells, which is temporally associated with the formation of gonococcal microcolonies. This chain is Type IV major pilin protein PilE (pilE), found in Neisseria gonorrhoeae.